We begin with the raw amino-acid sequence, 283 residues long: Thymidylate synthase (283 aa).

Arg22 is a dUMP binding site. Cys160 (nucleophile) is an active-site residue. DUMP contacts are provided by residues 180–183 (RSCD), Asn191, and 221–223 (HIY). Asp183 provides a ligand contact to (6R)-5,10-methylene-5,6,7,8-tetrahydrofolate. Ser282 serves as a coordination point for (6R)-5,10-methylene-5,6,7,8-tetrahydrofolate.

It belongs to the thymidylate synthase family. Bacterial-type ThyA subfamily. As to quaternary structure, homodimer.

It is found in the cytoplasm. It catalyses the reaction dUMP + (6R)-5,10-methylene-5,6,7,8-tetrahydrofolate = 7,8-dihydrofolate + dTMP. It functions in the pathway pyrimidine metabolism; dTTP biosynthesis. Functionally, catalyzes the reductive methylation of 2'-deoxyuridine-5'-monophosphate (dUMP) to 2'-deoxythymidine-5'-monophosphate (dTMP) while utilizing 5,10-methylenetetrahydrofolate (mTHF) as the methyl donor and reductant in the reaction, yielding dihydrofolate (DHF) as a by-product. This enzymatic reaction provides an intracellular de novo source of dTMP, an essential precursor for DNA biosynthesis. This is Thymidylate synthase from Vibrio vulnificus (strain YJ016).